The chain runs to 423 residues: Core protease OPG083 (423 aa).

Residues H241, D248, and C328 contribute to the active site.

The protein belongs to the peptidase C57 family.

It is found in the virion. Its function is as follows. Late protein responsible for processing most or all of the viral core and membrane proteins known to undergo morphogenesis-associated proteolysis. These proteolytic events are involved in the transformation of immature virions (IV) into mature virions (MV). Probably cleaves at least the OPG129/A3, OPG136/A10, OPG098/L4, and OPG144/A17 precursors preferentially at Ala-Gly-|-Ala motifs. Also seems to process Ala-Gly-|-Ser and Ala-Gly-|-Thr motifs. The chain is Core protease OPG083 (OPG083) from Bos taurus (Bovine).